Here is a 404-residue protein sequence, read N- to C-terminus: Argininosuccinate synthase (404 aa).

9–17 (AYSGGLDTS) is an ATP binding site. Y86 serves as a coordination point for L-citrulline. Residue G116 coordinates ATP. T118, N122, and D123 together coordinate L-aspartate. L-citrulline is bound at residue N122. The L-citrulline site is built by R126, S174, S183, E259, and Y271.

The protein belongs to the argininosuccinate synthase family. Type 1 subfamily. Homotetramer.

Its subcellular location is the cytoplasm. It catalyses the reaction L-citrulline + L-aspartate + ATP = 2-(N(omega)-L-arginino)succinate + AMP + diphosphate + H(+). It functions in the pathway amino-acid biosynthesis; L-arginine biosynthesis; L-arginine from L-ornithine and carbamoyl phosphate: step 2/3. In Listeria innocua serovar 6a (strain ATCC BAA-680 / CLIP 11262), this protein is Argininosuccinate synthase.